The primary structure comprises 500 residues: Cytochrome P450 71B38 (500 aa).

A helical transmembrane segment spans residues 3-23; that stretch reads IFLCFLLLLPLSLILFKKLLP. Cysteine 441 provides a ligand contact to heme.

It belongs to the cytochrome P450 family. The cofactor is heme.

Its subcellular location is the membrane. In Arabidopsis thaliana (Mouse-ear cress), this protein is Cytochrome P450 71B38 (CYP71B38).